Reading from the N-terminus, the 139-residue chain is MPRGVYLGFDFGYKRIGVAVGQRLTCSASPLSTIEAKAGIPDWNTIQKVITQWNPQALIVGLPTCIDDRELYTTSAARRFAKQLHKQFSLPVHLVDERLSTVEARGYLFEQGGYRQIKKAEVDSIAACVILEQWLQQSE.

The protein belongs to the YqgF nuclease family.

It is found in the cytoplasm. Functionally, could be a nuclease involved in processing of the 5'-end of pre-16S rRNA. This chain is Putative pre-16S rRNA nuclease, found in Legionella pneumophila (strain Lens).